A 585-amino-acid polypeptide reads, in one-letter code: Regulator of gene activity (585 aa).

Over residues 42-56 (FQTDFANSYPGTANY) the composition is skewed to polar residues. Disordered stretches follow at residues 42–93 (FQTD…GNRN), 148–191 (GGGG…PGSK), and 349–394 (GVGG…KVTN). The span at 58–71 (QAPQQQQQQQQQPQ) shows a compositional bias: low complexity. Residues 166–184 (PSLTNARGQNDQTLPQSNP) are compositionally biased toward polar residues. The segment covering 349–367 (GVGGGLGSGSGSSGSGAGG) has biased composition (gly residues). The segment covering 372–388 (DNSSNDKLVKSGVQTSP) has biased composition (polar residues).

Belongs to the CNOT2/3/5 family. As to quaternary structure, component of the CCR4-NOT complex composed of at least Pop2/Caf1-55, Ccr4, Not1, Rga/Not2, and Not3. In terms of tissue distribution, expressed in heterogeneous levels between adjacent germline stem cells (at protein level).

Its subcellular location is the cytoplasm. In terms of biological role, component of the CCR4-NOT complex which is one of the major cellular mRNA deadenylases and is linked to various cellular processes including bulk mRNA degradation, miRNA-mediated repression, translational repression during translational initiation and general transcription regulation. Additional complex functions may be a consequence of its influence on mRNA expression. Essential for viability. Acts as a suppressor of position effect variegation (PEV) at the white locus and regulates the expression of several unrelated genes. Plays a role in germline stem cell differentiation in the ovaries. The sequence is that of Regulator of gene activity from Drosophila melanogaster (Fruit fly).